A 321-amino-acid polypeptide reads, in one-letter code: Annexin D3 (321 aa).

The residue at position 2 (Ala-2) is an N-acetylalanine. 4 Annexin repeats span residues Pro-11–Tyr-82, Asp-83–Ser-159, Glu-171–Phe-243, and Thr-247–Gly-318. 3 residues coordinate Ca(2+): Gly-26, Gly-28, and Glu-68. Thr-117 carries the phosphothreonine modification. Ile-260 and Gly-264 together coordinate Ca(2+). A Phosphotyrosine modification is found at Tyr-289. Position 304 (Asp-304) interacts with Ca(2+).

Belongs to the annexin (TC 1.A.31.1) family. In terms of tissue distribution, expressed mainly in roots and flowers. Lower in stems and leaves.

This is Annexin D3 (ANN3) from Arabidopsis thaliana (Mouse-ear cress).